Here is a 427-residue protein sequence, read N- to C-terminus: Tegument protein VP16 homolog (427 aa).

It belongs to the herpesviridae tegument protein VP16 protein family.

It localises to the virion tegument. It is found in the host nucleus. Transcriptional activator of immediate-early (IE) gene products (alpha genes). Acts as a key activator of lytic infection by initiating the lytic program through the assembly of the transcriptional regulatory VP16-induced complex composed of VP16 and two cellular factors, HCFC1 and POU2F1. VP16-induced complex represents a regulatory switch: when it is on, it promotes IE-gene expression and thus lytic infection, and when it is off, it limits IE-gene transcription favoring latent infection. Its function is as follows. May play a role in the aggregation of tegument proteins around nucleocapsids during virus morphogenesis. This chain is Tegument protein VP16 homolog (MDV061), found in Gallus gallus (Chicken).